The sequence spans 278 residues: Ribosomal protein L11 methyltransferase (278 aa).

Positions 131, 152, 173, and 214 each coordinate S-adenosyl-L-methionine.

It belongs to the methyltransferase superfamily. PrmA family.

Its subcellular location is the cytoplasm. It carries out the reaction L-lysyl-[protein] + 3 S-adenosyl-L-methionine = N(6),N(6),N(6)-trimethyl-L-lysyl-[protein] + 3 S-adenosyl-L-homocysteine + 3 H(+). Its function is as follows. Methylates ribosomal protein L11. The chain is Ribosomal protein L11 methyltransferase from Campylobacter lari (strain RM2100 / D67 / ATCC BAA-1060).